The chain runs to 195 residues: MARTEKIYIYGASGHGLVCEDVAKNMGYKECIFLDDFKGMKFESTLPKYDFFIAIGNNEIRKKIYQKISENGFKIVNLIHKSALISPSAIVEENAGILIMPYVVINAKAKIEKGVILNTSSVIEHECVIGEFSHVSVGAKCAGNVKIGKNCFLGINSCVLPNLSLADDSILGGGATLVKNQDEKGVFVGVPAKRM.

Residues 13–15 (SGH), 35–36 (DD), and glycine 56 each bind substrate. Histidine 125 (proton acceptor) is an active-site residue. Histidine 134, isoleucine 155, and glycine 173 together coordinate acetyl-CoA.

The protein belongs to the transferase hexapeptide repeat family. As to quaternary structure, homotrimer.

It catalyses the reaction UDP-N-acetylbacillosamine + acetyl-CoA = UDP-N,N'-diacetylbacillosamine + CoA + H(+). Its pathway is protein modification; protein glycosylation. In terms of biological role, acetyltransferase that modifies the UDP-4-amino-sugar to form UDP-N,N'-diacetylbacillosamine in the N-linked protein glycosylation pathway. The protein is UDP-N-acetylbacillosamine N-acetyltransferase (pglD) of Campylobacter jejuni subsp. jejuni serotype O:2 (strain ATCC 700819 / NCTC 11168).